We begin with the raw amino-acid sequence, 94 residues long: Acylphosphatase (94 aa).

The Acylphosphatase-like domain maps to Thr-8–His-94. Catalysis depends on residues Arg-23 and Asn-41. A disordered region spans residues Pro-69 to His-94. Over residues Leu-77–Arg-86 the composition is skewed to basic and acidic residues.

This sequence belongs to the acylphosphatase family.

It carries out the reaction an acyl phosphate + H2O = a carboxylate + phosphate + H(+). The protein is Acylphosphatase (acyP) of Bordetella avium (strain 197N).